A 185-amino-acid polypeptide reads, in one-letter code: Ribosome-recycling factor (185 aa).

It belongs to the RRF family.

Its subcellular location is the cytoplasm. In terms of biological role, responsible for the release of ribosomes from messenger RNA at the termination of protein biosynthesis. May increase the efficiency of translation by recycling ribosomes from one round of translation to another. Its function is as follows. Plays a role in sporulation. In Bacillus subtilis (strain 168), this protein is Ribosome-recycling factor.